A 130-amino-acid chain; its full sequence is Cysteine methyltransferase (130 aa).

It carries out the reaction [trehalose-6-phosphate synthase]-L-cysteine + S-adenosyl-L-methionine = [trehalose-6-phosphate synthase]-S-methyl-L-cysteine + S-adenosyl-L-homocysteine + H(+). S-adenosyl-L-methionine-dependent protein-cysteine S-methyltransferase with broad substrate specificity. Methylates trehalose-6-phosphate synthase (TPS), enhancing its enzymatic activity and promoting trehalose synthesis upon entry of cells into stationary phase. In Saccharomyces cerevisiae (Baker's yeast), this protein is Cysteine methyltransferase.